Here is a 911-residue protein sequence, read N- to C-terminus: Viral IRF4-like protein (911 aa).

Residues 7-114 constitute a DNA-binding region (IRF tryptophan pentad repeat); it reads SEWATLWIID…GSYVVWQLVR (108 aa). Disordered regions lie at residues 147–184, 211–302, 494–537, and 681–727; these read TTAT…PRKS, ASTS…SRLP, GGAP…PYVC, and ELQE…FFDP. Positions 211–221 are enriched in low complexity; sequence ASTSGMGSSGT. Polar residues-rich tracts occupy residues 222-231 and 495-505; these read RQVTQASSFT and GAPNQGLSHTQ. A compositionally biased stretch (basic residues) spans 697 to 710; it reads RRPRSRSPHGRRTP.

This sequence belongs to the IRF family. Interacts with host MDM2; this interaction facilitates the proteasomal degradation of TP53/p53. Interacts with host IRF7; this interaction prevents IRF7 dimerization and subsequent activation.

It is found in the host nucleus. Functionally, plays a role in host cell apoptosis modulation by promoting TP53/p53 ubiquitination and subsequent degradation and thus down-regulating TP53/p53-mediated apoptosis. Works as a potential viral transcription factor to modulate host gene expression to build favorable environments for the viral lytic life cycle and greatly accelerates the induction of an immediate early gene RTA, early genes ORF36 and ORF57, late genes ORF25 and ORF64, and latent genes LANA1 and v-IRF3. Inhibits host interferon-alpha production by interacting with host IRF7 and preventing IRF7 dimerization. This is Viral IRF4-like protein (vIRF-4) from Homo sapiens (Human).